We begin with the raw amino-acid sequence, 257 residues long: AA9 family lytic polysaccharide monooxygenase U (257 aa).

Positions 1–19 are cleaved as a signal peptide; sequence MKLYLAAFLGAVATPGAFA. H20 is a binding site for Cu(2+). N-linked (GlcNAc...) asparagine glycosylation is found at N29 and N71. An intrachain disulfide couples C74 to C194. Position 113 (H113) interacts with Cu(2+). An N-linked (GlcNAc...) asparagine glycan is attached at N161. Q189 lines the O2 pocket. Y191 is a Cu(2+) binding site.

It belongs to the polysaccharide monooxygenase AA9 family. Cu(2+) serves as cofactor.

The protein resides in the secreted. The catalysed reaction is [(1-&gt;4)-beta-D-glucosyl]n+m + reduced acceptor + O2 = 4-dehydro-beta-D-glucosyl-[(1-&gt;4)-beta-D-glucosyl]n-1 + [(1-&gt;4)-beta-D-glucosyl]m + acceptor + H2O.. Functionally, lytic polysaccharide monooxygenase (LPMO) that depolymerizes crystalline and amorphous polysaccharides via the oxidation of scissile alpha- or beta-(1-4)-glycosidic bonds, yielding C1 and C4 oxidation products. Catalysis by LPMOs requires the reduction of the active-site copper from Cu(II) to Cu(I) by a reducing agent and H(2)O(2) or O(2) as a cosubstrate. Shows no activity on wheat arabinoxylan, konjac glucomannan, acetylated spruce galactoglucomannan, or cellopentaose. The polypeptide is AA9 family lytic polysaccharide monooxygenase U (Thermothielavioides terrestris (strain ATCC 38088 / NRRL 8126) (Thielavia terrestris)).